A 291-amino-acid polypeptide reads, in one-letter code: MAAGKEIRGKIKSVENTKKITKAMEMVSVSKMRKAQERMRAARPYSEKIRNIAANLGKANPEYTHAFMKKNDAKALGFIIVTSDKGLCGGLNTNLLRAVTAKLREAQAAGVAIESVAIGSKGLGFLNRIGARVVAHVTHLGDTPHLDKLIGPVKTLLDAYAEGKLSAVYLSYTKFINTIKQEPLVEQLLPLAEDSLKVEEGQHSWDYIYEPDAQSVIDELLVRYVESLVYQAVAENMASEHSARMVAMKAATDNAGNVISELKLVYNKTRQAGITKELSEIVSGAAAAAGV.

It belongs to the ATPase gamma chain family. F-type ATPases have 2 components, CF(1) - the catalytic core - and CF(0) - the membrane proton channel. CF(1) has five subunits: alpha(3), beta(3), gamma(1), delta(1), epsilon(1). CF(0) has three main subunits: a, b and c.

It is found in the cell inner membrane. Produces ATP from ADP in the presence of a proton gradient across the membrane. The gamma chain is believed to be important in regulating ATPase activity and the flow of protons through the CF(0) complex. In Verminephrobacter eiseniae (strain EF01-2), this protein is ATP synthase gamma chain.